The sequence spans 143 residues: Transcriptional regulator MraZ (143 aa).

SpoVT-AbrB domains are found at residues 5–47 (EYRH…PQVE) and 76–119 (ATEC…SKEL).

This sequence belongs to the MraZ family. Forms oligomers.

It is found in the cytoplasm. It localises to the nucleoid. This Halalkalibacterium halodurans (strain ATCC BAA-125 / DSM 18197 / FERM 7344 / JCM 9153 / C-125) (Bacillus halodurans) protein is Transcriptional regulator MraZ.